Reading from the N-terminus, the 1023-residue chain is 2-oxoglutarate dehydrogenase complex component E1 (1023 aa).

Residues 1-40 (MFHLRTCAAKLRPLTASQTVKTFSQNRPAAARTFGQIRCY) constitute a mitochondrion transit peptide. Position 74 is an N6-succinyllysine (K74). A Phosphoserine modification is found at S100. 3 residues coordinate Ca(2+): H143, D156, and D158. R312 contacts thiamine diphosphate. An N6-acetyllysine modification is found at K401. Thiamine diphosphate contacts are provided by D411, N444, and I446. D411, N444, and I446 together coordinate Mg(2+). Residue K534 forms a Glycyl lysine isopeptide (Lys-Gly) (interchain with G-Cter in ubiquitin) linkage. At K564 the chain carries N6-succinyllysine. Position 676 (Q676) interacts with thiamine diphosphate. K970 carries the N6-acetyllysine modification.

This sequence belongs to the alpha-ketoglutarate dehydrogenase family. As to quaternary structure, homodimer. The 2-oxoglutarate dehydrogenase complex is composed of OGDH (2-oxoglutarate dehydrogenase; E1), DLST (dihydrolipoamide succinyltransferase; E2), DLD (dihydrolipoamide dehydrogenase; E3) and the assembly factor KGD4. It contains multiple copies of the three enzymatic components (E1, E2 and E3). In the nucleus, the 2-oxoglutarate dehydrogenase complex associates with KAT2A. Interacts with ABHD11; this interaction maintains the functional lipoylation of the 2-oxoglutarate dehydrogenase complex. Thiamine diphosphate serves as cofactor. The cofactor is Mg(2+).

The protein localises to the mitochondrion. It is found in the nucleus. It catalyses the reaction N(6)-[(R)-lipoyl]-L-lysyl-[protein] + 2-oxoglutarate + H(+) = N(6)-[(R)-S(8)-succinyldihydrolipoyl]-L-lysyl-[protein] + CO2. Its activity is regulated as follows. Calcium ions and ADP stimulate, whereas ATP and NADH reduce catalytic activity. Its function is as follows. 2-oxoglutarate dehydrogenase (E1o) component of the 2-oxoglutarate dehydrogenase complex (OGDHC). Participates in the first step, rate limiting for the overall conversion of 2-oxoglutarate to succinyl-CoA and CO(2) catalyzed by the whole OGDHC. Catalyzes the irreversible decarboxylation of 2-oxoglutarate (alpha-ketoglutarate) via the thiamine diphosphate (ThDP) cofactor and subsequent transfer of the decarboxylated acyl intermediate on an oxidized dihydrolipoyl group that is covalently amidated to the E2 enzyme (dihydrolipoyllysine-residue succinyltransferase or DLST). Plays a key role in the Krebs (citric acid) cycle, which is a common pathway for oxidation of fuel molecules, including carbohydrates, fatty acids, and amino acids. Can catalyze the decarboxylation of 2-oxoadipate in vitro, but at a much lower rate than 2-oxoglutarate. Mainly active in the mitochondrion. A fraction of the 2-oxoglutarate dehydrogenase complex also localizes in the nucleus and is required for lysine succinylation of histones: associates with KAT2A on chromatin and provides succinyl-CoA to histone succinyltransferase KAT2A. The sequence is that of 2-oxoglutarate dehydrogenase complex component E1 from Bos taurus (Bovine).